Here is a 398-residue protein sequence, read N- to C-terminus: Enoyl-[acyl-carrier-protein] reductase [NADH] (398 aa).

NAD(+)-binding positions include 48–53, 74–75, 111–112, and 139–140; these read GASTGY, FE, DA, and LA. Tyrosine 225 serves as a coordination point for substrate. Tyrosine 235 acts as the Proton donor in catalysis. Residues lysine 244 and 273–275 each bind NAD(+); that span reads VVT.

It belongs to the TER reductase family. Monomer.

It carries out the reaction a 2,3-saturated acyl-[ACP] + NAD(+) = a (2E)-enoyl-[ACP] + NADH + H(+). It functions in the pathway lipid metabolism; fatty acid biosynthesis. Functionally, involved in the final reduction of the elongation cycle of fatty acid synthesis (FAS II). Catalyzes the reduction of a carbon-carbon double bond in an enoyl moiety that is covalently linked to an acyl carrier protein (ACP). This chain is Enoyl-[acyl-carrier-protein] reductase [NADH], found in Paraburkholderia phytofirmans (strain DSM 17436 / LMG 22146 / PsJN) (Burkholderia phytofirmans).